Reading from the N-terminus, the 483-residue chain is NADH-quinone oxidoreductase subunit N (483 aa).

14 consecutive transmembrane segments (helical) span residues 8-28, 45-65, 78-98, 106-126, 131-151, 166-186, 206-226, 241-261, 275-295, 303-323, 330-350, 373-393, 399-419, and 452-472; these read INLALMLPEIVISVVAMGLLL, IAAGALMVAMVITLLGVGATQ, FAAFMKVMLYLSTLLPMVVSW, LGNGEYFVLTLFAMLGGMFMI, FLVLYLGIELLSLAIYVLAAY, FVLGSMASGILLYGISLIYGV, MLGITMGLILVVSGLSFKIAA, PTSVTAFMAAMPKIAAFAALF, WGPIMALLAVVSMGVGALAGL, LLAYSSIGHVGYALIGLAVGN, VLVYLTIYIFMNVGAFGLILV, LALLMAIFMFSMAGIPPLAGF, IFMAAIDAHMYTVAILGVLFS, and AIVGVSGILVVLWGILPGSLM.

The protein belongs to the complex I subunit 2 family. NDH-1 is composed of 14 different subunits. Subunits NuoA, H, J, K, L, M, N constitute the membrane sector of the complex.

It is found in the cell inner membrane. It carries out the reaction a quinone + NADH + 5 H(+)(in) = a quinol + NAD(+) + 4 H(+)(out). Functionally, NDH-1 shuttles electrons from NADH, via FMN and iron-sulfur (Fe-S) centers, to quinones in the respiratory chain. The immediate electron acceptor for the enzyme in this species is believed to be ubiquinone. Couples the redox reaction to proton translocation (for every two electrons transferred, four hydrogen ions are translocated across the cytoplasmic membrane), and thus conserves the redox energy in a proton gradient. The protein is NADH-quinone oxidoreductase subunit N of Magnetococcus marinus (strain ATCC BAA-1437 / JCM 17883 / MC-1).